The following is a 216-amino-acid chain: Flagellin B2 (216 aa).

Residues 1–12 (MKIKEFMSNKKG) constitute a propeptide that is removed on maturation. 6 N-linked (GlcNAc...) asparagine glycosylation sites follow: asparagine 38, asparagine 72, asparagine 77, asparagine 113, asparagine 172, and asparagine 208.

This sequence belongs to the archaeal flagellin family. Post-translationally, N-linked glycans consist of the 779 Da trisaccharide beta-ManNAc(Thr)-(1-4)-beta-GlcNAc3NAcA-(1-3)-beta-GlcNAc.

The protein resides in the archaeal flagellum. Flagellin is the subunit protein which polymerizes to form the filaments of archaeal flagella. The protein is Flagellin B2 (flaB2) of Methanococcus voltae.